Here is an 84-residue protein sequence, read N- to C-terminus: MTTFEEAAQKVKEFTKKPSNDELLSLYGLYKQGTDGDCNISEPWAVQVEAKAKYNAWNALKGTSKEDAKAKYVALYEQLATKYA.

The 84-residue stretch at 1-84 folds into the ACB domain; that stretch reads MTTFEEAAQK…LYEQLATKYA (84 aa). An acyl-CoA is bound by residues K12, 27 to 31, K53, and Y72; that span reads YGLYK.

It belongs to the ACBP family. As to quaternary structure, interacts with dhkA.

Binds to acyl-CoA. Processed into the SDF-2 (spore differentiation factor 2) a peptide which triggers sporulation. SDF-2 appears to stimulate prestalk cells to release additional SDF-2 by acting through a signal transduction pathway that also involves dhkA, regA and PKA. Induces encapsulation of prespore cells in a dhkA-dependent manner. GABA induces the release of acbA from prespore cells and induces the exposure of tagC on the surface of prestalk cells where it can convert acbA to SDF-2. Glutamate acts as a competitive inhibitor and is also able to inhibit induction of sporulation by SDF-2. This is Acyl-CoA-binding protein (acbA) from Dictyostelium discoideum (Social amoeba).